The chain runs to 208 residues: ATP-dependent Clp protease proteolytic subunit (208 aa).

The Nucleophile role is filled by serine 98. The active site involves histidine 123.

This sequence belongs to the peptidase S14 family. Fourteen ClpP subunits assemble into 2 heptameric rings which stack back to back to give a disk-like structure with a central cavity, resembling the structure of eukaryotic proteasomes.

The protein resides in the cytoplasm. The catalysed reaction is Hydrolysis of proteins to small peptides in the presence of ATP and magnesium. alpha-casein is the usual test substrate. In the absence of ATP, only oligopeptides shorter than five residues are hydrolyzed (such as succinyl-Leu-Tyr-|-NHMec, and Leu-Tyr-Leu-|-Tyr-Trp, in which cleavage of the -Tyr-|-Leu- and -Tyr-|-Trp bonds also occurs).. In terms of biological role, cleaves peptides in various proteins in a process that requires ATP hydrolysis. Has a chymotrypsin-like activity. Plays a major role in the degradation of misfolded proteins. This is ATP-dependent Clp protease proteolytic subunit from Wolbachia sp. subsp. Brugia malayi (strain TRS).